The following is a 70-amino-acid chain: Gas vesicle protein A (70 aa).

Belongs to the gas vesicle GvpA family. The gas vesicle shell is 2 nm thick and consists of a single layer of this protein. It forms helical ribs nearly perpendicular to the long axis of the vesicle.

The protein localises to the gas vesicle shell. Functionally, gas vesicles are hollow, gas filled proteinaceous nanostructures found in some microorganisms. During planktonic growth they allow positioning of the organism at a favorable depth for light or nutrient acquisition. GvpA forms the protein shell. The chain is Gas vesicle protein A from Bradyrhizobium sp. (strain ORS 278).